Consider the following 490-residue polypeptide: Cytochrome P450 2C20 (490 aa).

Cysteine 435 provides a ligand contact to heme.

The protein belongs to the cytochrome P450 family. Requires heme as cofactor.

The protein localises to the endoplasmic reticulum membrane. It localises to the microsome membrane. It catalyses the reaction an organic molecule + reduced [NADPH--hemoprotein reductase] + O2 = an alcohol + oxidized [NADPH--hemoprotein reductase] + H2O + H(+). Its function is as follows. Cytochromes P450 are a group of heme-thiolate monooxygenases. In liver microsomes, this enzyme is involved in an NADPH-dependent electron transport pathway. It oxidizes a variety of structurally unrelated compounds, including steroids, fatty acids, and xenobiotics. The polypeptide is Cytochrome P450 2C20 (CYP2C20) (Macaca fascicularis (Crab-eating macaque)).